The primary structure comprises 975 residues: FHF complex subunit HOOK-interacting protein 1B (975 aa).

The tract at residues 465–496 (APSPPRPEHASWARGPGSPSVDSSSVVTVPRP) is disordered. S467 is modified (phosphoserine). The segment covering 482–496 (SPSVDSSSVVTVPRP) has biased composition (low complexity). A phosphoserine mark is found at S510, S523, S529, and S533. 3 disordered regions span residues 511–548 (LGGS…GELE), 573–621 (SAPY…GLAV), and 690–717 (SNGG…SFTC). Residues 527-538 (TASPTSSPSRRP) are compositionally biased toward low complexity. Residues 597–608 (LLPEEDRDNVRE) are compositionally biased toward basic and acidic residues. Position 863 is a phosphoserine (S863). Residue T892 is modified to Phosphothreonine. Residue S900 is modified to Phosphoserine.

The protein belongs to the FHIP family. In terms of assembly, component of the FTS/Hook/FHIP complex (FHF complex), composed of AKTIP/FTS, FHIP1B, and one or more members of the Hook family of proteins HOOK1, HOOK2, and HOOK3. The FHF complex associates with the homotypic vesicular sorting complex (the HOPS complex).

In terms of biological role, component of the FTS/Hook/FHIP complex (FHF complex). The FHF complex may function to promote vesicle trafficking and/or fusion via the homotypic vesicular protein sorting complex (the HOPS complex). FHF complex promotes the distribution of AP-4 complex to the perinuclear area of the cell. The protein is FHF complex subunit HOOK-interacting protein 1B of Mus musculus (Mouse).